A 920-amino-acid polypeptide reads, in one-letter code: Translation initiation factor IF-2 (920 aa).

Composition is skewed to basic and acidic residues over residues 149–175, 186–197, and 255–265; these read EAEM…EKPV, AEKKATADKAAK, and AKPEGADDKKK. Disordered regions lie at residues 149-197 and 245-319; these read EAEM…KAAK and EAKK…KQRQ. A compositionally biased stretch (gly residues) spans 301–311; sequence SSGGVGGWRSG. A tr-type G domain is found at 418–585; it reads PRPPVVTVMG…NVLLQAEILE (168 aa). The tract at residues 427–434 is G1; the sequence is GHVDHGKT. 427–434 lines the GTP pocket; sequence GHVDHGKT. A G2 region spans residues 452-456; that stretch reads GITQH. The G3 stretch occupies residues 473–476; the sequence is DTPG. Residues 473–477 and 527–530 each bind GTP; these read DTPGH and NKID. A G4 region spans residues 527–530; sequence NKID. The tract at residues 563–565 is G5; that stretch reads SAK.

It belongs to the TRAFAC class translation factor GTPase superfamily. Classic translation factor GTPase family. IF-2 subfamily.

The protein localises to the cytoplasm. Functionally, one of the essential components for the initiation of protein synthesis. Protects formylmethionyl-tRNA from spontaneous hydrolysis and promotes its binding to the 30S ribosomal subunits. Also involved in the hydrolysis of GTP during the formation of the 70S ribosomal complex. In Polynucleobacter asymbioticus (strain DSM 18221 / CIP 109841 / QLW-P1DMWA-1) (Polynucleobacter necessarius subsp. asymbioticus), this protein is Translation initiation factor IF-2.